A 195-amino-acid chain; its full sequence is NADH-quinone oxidoreductase subunit B (195 aa).

Residues cysteine 74, cysteine 75, cysteine 139, and cysteine 169 each coordinate [4Fe-4S] cluster.

This sequence belongs to the complex I 20 kDa subunit family. In terms of assembly, NDH-1 is composed of 14 different subunits. Subunits NuoB, C, D, E, F, and G constitute the peripheral sector of the complex. [4Fe-4S] cluster serves as cofactor.

The protein localises to the cell inner membrane. It catalyses the reaction a quinone + NADH + 5 H(+)(in) = a quinol + NAD(+) + 4 H(+)(out). NDH-1 shuttles electrons from NADH, via FMN and iron-sulfur (Fe-S) centers, to quinones in the respiratory chain. The immediate electron acceptor for the enzyme in this species is believed to be ubiquinone. Couples the redox reaction to proton translocation (for every two electrons transferred, four hydrogen ions are translocated across the cytoplasmic membrane), and thus conserves the redox energy in a proton gradient. This chain is NADH-quinone oxidoreductase subunit B, found in Methylorubrum extorquens (strain PA1) (Methylobacterium extorquens).